A 297-amino-acid polypeptide reads, in one-letter code: MPWRPPAHSVPGREGQFYAATFHAHAAFCGCGGFIEHLNSIHPRFLGAGGPPPPPPALRRALPAPEGPGGPPQHAPPNPPPEGDHQPPRRGGGAGGAGDGHAGDGDAAEEYGPEDLDLLFAAAAEDDMSFKAPSSRHQTRGPGRRAKKRLRFSPGSPRQPRLGGESRRSPSPRRTSTPKRKRGATPQAAPAAKTTPASPQTRTPSPVRRRTQTEEGSPHRPPPYIAPPPIVEDLLFPNTQKKKKFSKFDWETEAQLAACFDRPMRFFPSDLPTYPWLPKKPTTQTTFRVSFQLKAPQ.

The disordered stretch occupies residues 46 to 229; the sequence is LGAGGPPPPP…RPPPYIAPPP (184 aa). Residues 65 to 81 show a composition bias toward pro residues; sequence PEGPGGPPQHAPPNPPP. Positions 90 to 100 are enriched in gly residues; sequence RGGGAGGAGDG. Acidic residues predominate over residues 106–117; the sequence is DAAEEYGPEDLD. Positions 137 to 151 are enriched in basic residues; that stretch reads HQTRGPGRRAKKRLR. Residues 184–201 are compositionally biased toward low complexity; the sequence is ATPQAAPAAKTTPASPQT. A compositionally biased stretch (pro residues) spans 219–229; sequence HRPPPYIAPPP.

This is an uncharacterized protein from Torque teno virus (isolate Human/China/CT23F/2001) (TTV).